The sequence spans 590 residues: Synaptotagmin-3 (590 aa).

At 1-54 the chain is on the vesicular side; the sequence is MSGDYEDDLCRRALILVSDLCARVRDADTNDRCQEFNDRIRGYPRGPDADISVS. A cysteine motif region spans residues 10–34; that stretch reads CRRALILVSDLCARVRDADTNDRCQ. A helical membrane pass occupies residues 55-75; it reads LLSVIVTFCGIVLLGVSLFVS. Topologically, residues 76 to 590 are cytoplasmic; that stretch reads WKLCWVPWRD…KGLSEKENSE (515 aa). Disordered regions lie at residues 143–220, 234–260, and 273–295; these read AELL…VTSL, TQQTLTSQPDPSSEERPPALPLPLPGG, and ELYQGTGPGGRRSGGGPGSGEAG. The span at 185–203 shows a compositional bias: low complexity; that stretch reads SPELPSEGGAGSGLLLLPP. The span at 234 to 243 shows a compositional bias: polar residues; that stretch reads TQQTLTSQPD. Residues 278-295 show a composition bias toward gly residues; the sequence is TGPGGRRSGGGPGSGEAG. Omega-N-methylarginine is present on arginine 284. C2 domains are found at residues 299–420 and 431–565; these read PCGR…PLWR and DLGE…EHWH. Residues aspartate 330, aspartate 336, aspartate 388, phenylalanine 389, aspartate 390, serine 393, aspartate 396, aspartate 462, aspartate 468, aspartate 522, and aspartate 524 each coordinate Ca(2+).

Belongs to the synaptotagmin family. In terms of assembly, homodimer; disulfide-linked via the cysteine motif. Can also form heterodimers with SYT6, SYT9 and SYT10. It depends on Ca(2+) as a cofactor. In terms of tissue distribution, expressed in melanocytes.

The protein localises to the cell membrane. It localises to the cytoplasmic vesicle. It is found in the secretory vesicle membrane. Its function is as follows. Ca(2+) sensor involved in Ca(2+)-dependent exocytosis of secretory vesicles through Ca(2+) and phospholipid binding to the C2 domain. Ca(2+) induces binding of the C2-domains to phospholipid membranes and to assembled SNARE-complexes; both actions contribute to triggering exocytosis. Plays a role in dendrite formation by melanocytes. The sequence is that of Synaptotagmin-3 (SYT3) from Homo sapiens (Human).